The chain runs to 95 residues: Defensin (95 aa).

A signal peptide spans 1–17 (MKNYVFALLVVTAVAIA). A propeptide spanning residues 18 to 55 (LPNEDKNAPMRVHLLPQKEDESLKLEVTPVKEHHRTRR) is cleaved from the precursor. Intrachain disulfides connect cysteine 58-cysteine 85, cysteine 71-cysteine 91, and cysteine 75-cysteine 93.

Belongs to the invertebrate defensin family. Type 1 subfamily.

It is found in the secreted. Its function is as follows. Antibacterial peptide mostly active against Gram-positive bacteria. The polypeptide is Defensin (Formica aquilonia (Red wood ant)).